We begin with the raw amino-acid sequence, 255 residues long: Ribonuclease HII (255 aa).

The region spanning 72–255 (AIICGIDEVG…KSFEPIKSLL (184 aa)) is the RNase H type-2 domain. Residues Asp78, Glu79, and Asp170 each contribute to the a divalent metal cation site.

This sequence belongs to the RNase HII family. Requires Mn(2+) as cofactor. It depends on Mg(2+) as a cofactor.

The protein resides in the cytoplasm. It carries out the reaction Endonucleolytic cleavage to 5'-phosphomonoester.. Functionally, endonuclease that specifically degrades the RNA of RNA-DNA hybrids. The chain is Ribonuclease HII from Staphylococcus aureus (strain bovine RF122 / ET3-1).